We begin with the raw amino-acid sequence, 1146 residues long: Lysine-specific demethylase 2A (1146 aa).

The JmjC domain maps to 146-314 (FSHTKLENLV…MQLRIYSIED (169 aa)). Threonine 207 contacts substrate. Residues histidine 210 and aspartate 212 each coordinate Fe cation. A substrate-binding site is contributed by lysine 227. Histidine 282 lines the Fe cation pocket. 2 disordered regions span residues 363-467 (LNGR…PDSP) and 554-585 (TKPH…SSGA). Over residues 373–387 (SSSSSSSSSGLSSSS) the composition is skewed to low complexity. A compositionally biased stretch (acidic residues) spans 388 to 401 (DNDDSSDQDWEEEE). Positions 402–442 (GLRKRERDRCRVERELQRKRNRDRQQRDQERDRHGRTERII) are enriched in basic and acidic residues. The span at 453–467 (LTPPPSLPLPTPDSP) shows a compositional bias: pro residues. Over residues 566–584 (STAPPRTSGTPSGTTASSG) the composition is skewed to low complexity. The CXXC-type zinc finger occupies 585-631 (ARRRRVRCRKCQACVQRECGTCHYCKDMKKFGGPGRMKQSCVLRQCL). Zn(2+)-binding residues include cysteine 592, cysteine 595, cysteine 598, cysteine 603, cysteine 606, cysteine 609, cysteine 625, and cysteine 630. Residues 638–699 (SVTCALCGEV…YWECPKCYEG (62 aa)) form a PHD-type zinc finger. 2 disordered regions span residues 733–800 (VLRP…EGDR) and 832–867 (TPNP…ENVM). Over residues 739–762 (GQSPPSPPLLLLPPSPSSAPPTPP) the composition is skewed to pro residues. Basic and acidic residues predominate over residues 772 to 789 (SREERAKRRQLAREKENH). The segment covering 849-864 (EREEEEEEEEEEEETE) has biased composition (acidic residues). Residues 874–919 (STSMQKDVWLSVFHYLTHEELCICMRVCKAWYKWGCDKRLWSRIDV) enclose the F-box domain. LRR repeat units follow at residues 945–966 (WTNV…LKDL), 968–994 (LAGC…DLRW), 1032–1057 (GLDI…DLSH), 1058–1087 (CPLL…HLAG), 1088–1112 (CKGV…DLHG), and 1113–1138 (CKQV…CLSD).

Belongs to the JHDM1 histone demethylase family. Fe(2+) is required as a cofactor.

The protein resides in the nucleus. Its subcellular location is the nucleoplasm. It carries out the reaction N(6),N(6)-dimethyl-L-lysyl(36)-[histone H3] + 2 2-oxoglutarate + 2 O2 = L-lysyl(36)-[histone H3] + 2 formaldehyde + 2 succinate + 2 CO2. Its function is as follows. Histone demethylase that specifically demethylates 'Lys-36' of histone H3, thereby playing a central role in histone code. Preferentially demethylates dimethylated H3 'Lys-36' residue while it has weak or no activity for mono- and tri-methylated H3 'Lys-36'. May also recognize and bind to some phosphorylated proteins and promote their ubiquitination and degradation. Required to maintain the heterochromatic state. Associates with centromeres and represses transcription of small non-coding RNAs that are encoded by the clusters of satellite repeats at the centromere. Required to sustain centromeric integrity and genomic stability, particularly during mitosis. May play a role in the regulation of circadian gene expression. The polypeptide is Lysine-specific demethylase 2A (kdm2a) (Xenopus tropicalis (Western clawed frog)).